The sequence spans 467 residues: MAP kinase-interacting serine/threonine-protein kinase 2 (467 aa).

One can recognise a Protein kinase domain in the interval 83 to 367 (QLQQEILGEG…AAQVLQHPWV (285 aa)). ATP-binding positions include 89–97 (LGEGAYAKV) and Lys112. Asp204 acts as the Proton acceptor in catalysis. The Zn(2+) site is built by Cys298, Cys310, and Cys313. The disordered stretch occupies residues 432 to 467 (MQLSPPSESKLAKRRQQGSKGGISPPSLAPLLIVSD).

The protein belongs to the protein kinase superfamily. CAMK Ser/Thr protein kinase family. It depends on Mg(2+) as a cofactor. Requires Zn(2+) as cofactor.

The enzyme catalyses L-seryl-[protein] + ATP = O-phospho-L-seryl-[protein] + ADP + H(+). The catalysed reaction is L-threonyl-[protein] + ATP = O-phospho-L-threonyl-[protein] + ADP + H(+). In terms of biological role, may play a role in the response to environmental stress and cytokines. Appears to regulate translation by phosphorylating EIF4E, thus increasing the affinity of this protein for the 7-methylguanosine-containing mRNA cap. This chain is MAP kinase-interacting serine/threonine-protein kinase 2 (mknk2), found in Xenopus laevis (African clawed frog).